The following is a 430-amino-acid chain: DD-carboxypeptidase/endopeptidase Mpg (430 aa).

Zn(2+)-binding residues include His-295, Asp-299, and His-375.

The protein belongs to the peptidase M23B family. Monomer. Zn(2+) is required as a cofactor. In terms of processing, likely to be synthesized as a proenzyme. The cleavage of the N-terminal domain is probably required for the activation of the enzyme.

The protein resides in the cell outer membrane. In terms of biological role, has both endopeptidase and DD-carboxypeptidase activities. Degrades cell wall peptidoglycan (PG) to allow consummate expression of pili. The chain is DD-carboxypeptidase/endopeptidase Mpg from Neisseria meningitidis serogroup B (strain ATCC 13091 / M2091).